A 363-amino-acid chain; its full sequence is Protein RecA (363 aa).

An ATP-binding site is contributed by 79-86 (GPESSGKT).

Belongs to the RecA family.

It localises to the cytoplasm. Can catalyze the hydrolysis of ATP in the presence of single-stranded DNA, the ATP-dependent uptake of single-stranded DNA by duplex DNA, and the ATP-dependent hybridization of homologous single-stranded DNAs. It interacts with LexA causing its activation and leading to its autocatalytic cleavage. The polypeptide is Protein RecA (Borrelia duttonii (strain Ly)).